The sequence spans 292 residues: 31 kDa ribonucleoprotein, chloroplastic (292 aa).

The region spanning 88–166 (LKLFVGNLPF…RAIRVNAGPA (79 aa)) is the RRM 1 domain. A disordered region spans residues 165-203 (PAPAKRENSSFGGGRGGNSSYGGGRDGNSSFGGARGGRS). The interval 167-207 (PAKRENSSFGGGRGGNSSYGGGRDGNSSFGGARGGRSVDSS) is linker (Gly-rich). Over residues 175 to 190 (FGGGRGGNSSYGGGRD) the composition is skewed to gly residues. The RRM 2 domain occupies 208-286 (NRVYVGNLSW…RSIRVSAAEE (79 aa)).

As to expression, expressed at high levels in the leaves and seedlings, and lower levels are seen in the stems and roots.

It localises to the plastid. Its subcellular location is the chloroplast. The chain is 31 kDa ribonucleoprotein, chloroplastic from Nicotiana plumbaginifolia (Leadwort-leaved tobacco).